The chain runs to 416 residues: tRNA(Met) cytidine acetate ligase (416 aa).

ATP contacts are provided by residues V7–L20, G102, N166, and R191.

It belongs to the TmcAL family.

The protein resides in the cytoplasm. It carries out the reaction cytidine(34) in elongator tRNA(Met) + acetate + ATP = N(4)-acetylcytidine(34) in elongator tRNA(Met) + AMP + diphosphate. In terms of biological role, catalyzes the formation of N(4)-acetylcytidine (ac(4)C) at the wobble position of elongator tRNA(Met), using acetate and ATP as substrates. First activates an acetate ion to form acetyladenylate (Ac-AMP) and then transfers the acetyl group to tRNA to form ac(4)C34. The protein is tRNA(Met) cytidine acetate ligase of Syntrophomonas wolfei subsp. wolfei (strain DSM 2245B / Goettingen).